Reading from the N-terminus, the 725-residue chain is Another transcription unit protein (725 aa).

Residues Met-1–Ser-10 show a composition bias toward acidic residues. Disordered regions lie at residues Met-1–Arg-379, Arg-566–Asp-603, and Tyr-617–Asp-725. Over residues Gly-11 to Ala-70 the composition is skewed to low complexity. Over residues Arg-82–Lys-101 the composition is skewed to basic residues. A compositionally biased stretch (polar residues) spans Thr-104–Leu-116. Residues Gln-117–Thr-140 show a composition bias toward low complexity. The span at His-141–Lys-160 shows a compositional bias: basic residues. A phosphoserine mark is found at Ser-175, Ser-186, Ser-188, and Ser-190. Basic residues predominate over residues Ser-206 to Ser-223. Over residues Lys-224–Gly-242 the composition is skewed to low complexity. A phosphoserine mark is found at Ser-265, Ser-267, and Ser-269. Thr-286 is modified (phosphothreonine). 3 positions are modified to phosphoserine: Ser-288, Ser-290, and Ser-312. Over residues Gly-306–Ala-318 the composition is skewed to acidic residues. Basic residues predominate over residues Ser-325–Ser-353. Residues Arg-354–Glu-369 are compositionally biased toward basic and acidic residues. Ser-355 is modified (phosphoserine). Basic residues predominate over residues Asn-571 to Pro-582. Thr-593 is subject to Phosphothreonine. 3 positions are modified to phosphoserine: Ser-595, Ser-602, and Ser-631. Position 632 is a phosphothreonine (Thr-632). Ser-635, Ser-636, and Ser-642 each carry phosphoserine. A compositionally biased stretch (basic and acidic residues) spans Phe-644–Asp-665. The segment covering Ser-710–Asp-725 has biased composition (gly residues).

The chain is Another transcription unit protein (Atu) from Drosophila melanogaster (Fruit fly).